Consider the following 1507-residue polypeptide: Lhr helicase/ probable uracil glycosylase (1507 aa).

The segment at 1 to 856 is lhr-Core; that stretch reads MTTNGADPLG…ASLLFGYVGA (856 aa). The ATP site is built by F24, Q31, K54, and T55. Residues 35 to 226 form the Helicase ATP-binding domain; the sequence is WSAISEGNNT…FLSGQAPTTI (192 aa). Residues R122, R131, T145, S148, and M152 each contribute to the ssDNA site. ATP contacts are provided by D170 and E171. The DEAH box motif lies at 170-173; the sequence is DEVH. SsDNA contacts are provided by S253, W255, and R279. In terms of domain architecture, Helicase C-terminal spans 257 to 451; sequence DVEERIVDLV…VLAQHTVAVA (195 aa). ATP-binding residues include I377, R394, and H397. 7 residues coordinate ssDNA: K410, Q518, R519, I528, W597, D600, and R777. Residues 436–529 are WH domain; that stretch reads PANPLDVLAQ…LAVTSGGAIP (94 aa). The domain 4 stretch occupies residues 530-856; it reads DRGMFTVYLA…ASLLFGYVGA (327 aa). Residues 857–1507 form a CTD region; it reads FMYEGDSPLA…SRTPRGLRLR (651 aa).

This sequence belongs to the Lhr helicase family. Monomer. Homooligomerizes, possibly a homotetramer. Requires Ca(2+) as cofactor.

It catalyses the reaction Couples ATP hydrolysis with the unwinding of duplex DNA by translocating in the 3'-5' direction.. The enzyme catalyses ATP + H2O = ADP + phosphate + H(+). It carries out the reaction Hydrolyzes single-stranded DNA or mismatched double-stranded DNA and polynucleotides, releasing free uracil.. Functionally, a 3'-5' helicase involved in repair of at least 3 types of DNA cross-links, mitomycin C (MMC), cisplatin, and psoralen-UVA. Translocates 3'-to-5' on single-stranded (ss)DNA, unwinding any encountered duplex nucleic acid. A 3'-ssDNA loading strand of at least 15 nucleotides is required for helicase activity. An RNA:DNA hybrid with a 3'-ssDNA loading strand is an 8-fold better helicase substrate than 3'-tailed double-stranded (ds)DNA; substrates where the helicase loads on a 3'-ssRNA tail (DNA:RNA and RNA:RNA) are not unwound. Only (d)ATP is hydrolyzed by the protein, which has no ATPase activity in the absence of ssDNA or ssRNA. Arg-279 and Trp-597 are needed to couple ATP hydrolysis to mechanical work; a salt bridge between Arg-280 and Glu-550 closes a clamp around the ssDNA that is not large enough for dsDNA, while Ile-528 wedges between bases of the loading strand. Its function is as follows. Excises uracil residues from ssDNA. Uracil residues in DNA can arise as a result of misincorporation of dUMP residues by DNA polymerase or due to deamination of cytosine. The protein is Lhr helicase/ probable uracil glycosylase of Mycolicibacterium smegmatis (strain ATCC 700084 / mc(2)155) (Mycobacterium smegmatis).